Reading from the N-terminus, the 87-residue chain is Mu-theraphotoxin-Hs1a (87 aa).

The N-terminal stretch at 1–24 (MVNMKASMFLTFAGLVLLFVVCYA) is a signal peptide. Residues 25-52 (SESEEKEFPKEMLSSIFAVDNDFKQEER) constitute a propeptide that is removed on maturation. 3 disulfides stabilise this stretch: cysteine 54–cysteine 67, cysteine 61–cysteine 72, and cysteine 66–cysteine 79.

Belongs to the neurotoxin 10 (Hwtx-1) family. 51 (Hntx-8) subfamily. Hntx-8 sub-subfamily. Expressed by the venom gland.

It is found in the secreted. Probable sodium channel pore blocker that dose-dependently inhibits voltage-gated sodium channels (VGSC) on DUM neurons in a way similar to tetrodotoxin. Has no effect on the kinetics of activation and inactivation. Seems not to interact with VGSC in an inactivated state. In vivo, reversibly paralyzes cockroaches, and can enhance the muscular contraction elicited by stimulating its nerve. The polypeptide is Mu-theraphotoxin-Hs1a (Cyriopagopus schmidti (Chinese bird spider)).